The following is a 214-amino-acid chain: Alpha-S1-casein (214 aa).

A signal peptide spans methionine 1 to alanine 15. At serine 27 the chain carries Phosphoserine; in allele A. Serine 56 bears the Phosphoserine; in allele C mark. Residues serine 61 and serine 63 each carry the phosphoserine modification. The segment at methionine 69–alanine 91 is disordered. Serine 79 carries the phosphoserine; in alleles A and C modification. Serine 80 carries the post-translational modification Phosphoserine. Serine 81 bears the Phosphoserine; in alleles A and C mark. The residue at position 82 (serine 82) is a Phosphoserine. Position 83 is a phosphoserine; in alleles A and C (serine 83). Serine 90 bears the Phosphoserine mark. Positions arginine 105–glutamate 111 are opioid-like peptide sequence. At serine 130 the chain carries Phosphoserine.

Belongs to the alpha-casein family. As to expression, mammary gland specific. Secreted in milk.

Its subcellular location is the secreted. In terms of biological role, important role in the capacity of milk to transport calcium phosphate. The protein is Alpha-S1-casein (CSN1S1) of Ovis aries (Sheep).